Here is a 462-residue protein sequence, read N- to C-terminus: Protein Tube (462 aa).

In terms of domain architecture, Death spans 27–152; that stretch reads YSRNTELRRV…SAADFVALDF (126 aa). The segment at 218–265 is disordered; that stretch reads RDKSVPQPSGNTPPIAPPRRQQRSTTNSNFATLTGTGTTSTTIPNVPN. Positions 249–259 are enriched in low complexity; that stretch reads TLTGTGTTSTT. 2 repeat units span residues 262 to 269 and 286 to 293. The segment at 262-460 is 5 X approximate repeats; the sequence is NVPNLTILNP…ACNIPDLSEL (199 aa). Residues 301 to 317 show a composition bias toward polar residues; the sequence is RATVSDNPSNRTSSTDP. Residues 301–462 form a disordered region; it reads RATVSDNPSN…NIPDLSELQQ (162 aa). Copy 3 of the repeat occupies 319–326; it reads NIPRITLL. Residues 342–354 show a composition bias toward low complexity; sequence AKASTATTSTASS. A compositionally biased stretch (polar residues) spans 355–367; it reads NNLPMISALNISK. Residues 356 to 363 form repeat 4; that stretch reads NLPMISAL. Over residues 368–377 the composition is skewed to basic and acidic residues; that stretch reads GSRETLRPES. Residues 387–403 show a composition bias toward acidic residues; sequence DDDDDNDGEEDGEEEYP. The segment covering 409-424 has biased composition (low complexity); sequence NLSNSEQQSSNNDSSL. The segment covering 425-438 has biased composition (polar residues); the sequence is TTVTGTSGDNSFEL. A compositionally biased stretch (low complexity) spans 439-449; sequence TNDSSSTSNDD. Residues 453–460 form repeat 5; it reads NIPDLSEL.

In terms of assembly, interacts (via Death domain) with pll (via Death domain). In terms of processing, phosphorylated by pll.

The protein localises to the cytoplasm. The protein resides in the cell membrane. Plays an essential role in the Tl receptor signaling pathway that establishes embryonic dorsoventral polarity; the signal directs import of dl into ventral and ventrolateral nuclei, thereby establishing dorsoventral polarity. Tub recruits pll to the plasma membrane and protein-protein interaction activates pll. Also has a role in pupal pattern formation. This is Protein Tube (tub) from Drosophila melanogaster (Fruit fly).